A 157-amino-acid chain; its full sequence is 2-C-methyl-D-erythritol 2,4-cyclodiphosphate synthase (157 aa).

A divalent metal cation-binding residues include D8 and H10. 4-CDP-2-C-methyl-D-erythritol 2-phosphate-binding positions include 8–10 (DVH) and 34–35 (HS). Residue H42 participates in a divalent metal cation binding. Residues 56-58 (DIG), 61-65 (FPDTD), 100-106 (AQAPKML), 132-135 (TTTE), F139, and R142 each bind 4-CDP-2-C-methyl-D-erythritol 2-phosphate.

This sequence belongs to the IspF family. In terms of assembly, homotrimer. The cofactor is a divalent metal cation.

The catalysed reaction is 4-CDP-2-C-methyl-D-erythritol 2-phosphate = 2-C-methyl-D-erythritol 2,4-cyclic diphosphate + CMP. Its pathway is isoprenoid biosynthesis; isopentenyl diphosphate biosynthesis via DXP pathway; isopentenyl diphosphate from 1-deoxy-D-xylulose 5-phosphate: step 4/6. In terms of biological role, involved in the biosynthesis of isopentenyl diphosphate (IPP) and dimethylallyl diphosphate (DMAPP), two major building blocks of isoprenoid compounds. Catalyzes the conversion of 4-diphosphocytidyl-2-C-methyl-D-erythritol 2-phosphate (CDP-ME2P) to 2-C-methyl-D-erythritol 2,4-cyclodiphosphate (ME-CPP) with a corresponding release of cytidine 5-monophosphate (CMP). The sequence is that of 2-C-methyl-D-erythritol 2,4-cyclodiphosphate synthase from Erwinia tasmaniensis (strain DSM 17950 / CFBP 7177 / CIP 109463 / NCPPB 4357 / Et1/99).